The sequence spans 370 residues: Probable G-protein coupled receptor 85 (370 aa).

The Extracellular portion of the chain corresponds to 1-25 (MANYSHAADNILQNLSPLTAFLKLT). Residue Asn-3 is glycosylated (N-linked (GlcNAc...) asparagine). A helical membrane pass occupies residues 26 to 46 (SLGFIIGVSVVGNLLISILLA). Topologically, residues 47 to 57 (KDKTLHRAPYY) are cytoplasmic. A helical transmembrane segment spans residues 58–78 (FLLDLCCSDILRSAICFPFVF). Over 79–96 (NSVKNGSTWTYGTLTCKV) the chain is Extracellular. Residue Asn-83 is glycosylated (N-linked (GlcNAc...) asparagine). The cysteines at positions 94 and 172 are disulfide-linked. A helical membrane pass occupies residues 97–117 (IAFLGVLSCFHTAFMLFCISV). Residues 118 to 137 (TRYLAIAHHRFYTKRLTFWT) are Cytoplasmic-facing. The helical transmembrane segment at 138–158 (CLAVICMVWTLSVAMAFPPVL) threads the bilayer. Residues 159-188 (DVGTYSFIREEDQCTFQHRSFRANDSLGFM) lie on the Extracellular side of the membrane. N-linked (GlcNAc...) asparagine glycosylation occurs at Asn-182. A helical transmembrane segment spans residues 189–209 (LLLALILLATQLVYLKLIFFV). At 210-286 (HDRRKMKPVQ…FKMEKRISRM (77 aa)) the chain is on the cytoplasmic side. A helical membrane pass occupies residues 287-307 (FYIMTFLFLTLWGPYLVACYW). Topologically, residues 308–313 (RVFARG) are extracellular. Residues 314–334 (PVVPGGFLTAAVWMSFAQAGI) form a helical membrane-spanning segment. Residues 335 to 370 (NPFVCIFSNRELRRCFSTTLLYCRKSRLPREPYCVI) lie on the Cytoplasmic side of the membrane.

This sequence belongs to the G-protein coupled receptor 1 family. In terms of assembly, interacts with DLG4 and DLG3.

It localises to the cell membrane. Its subcellular location is the endoplasmic reticulum. Orphan receptor. The polypeptide is Probable G-protein coupled receptor 85 (GPR85) (Pongo abelii (Sumatran orangutan)).